The following is a 428-amino-acid chain: Serine--tRNA ligase (428 aa).

235 to 237 provides a ligand contact to L-serine; sequence TAE. 266-268 provides a ligand contact to ATP; it reads RSE. E289 contributes to the L-serine binding site. Position 353-356 (353-356) interacts with ATP; sequence EISS. S389 serves as a coordination point for L-serine.

The protein belongs to the class-II aminoacyl-tRNA synthetase family. Type-1 seryl-tRNA synthetase subfamily. As to quaternary structure, homodimer. The tRNA molecule binds across the dimer.

The protein localises to the cytoplasm. The catalysed reaction is tRNA(Ser) + L-serine + ATP = L-seryl-tRNA(Ser) + AMP + diphosphate + H(+). It catalyses the reaction tRNA(Sec) + L-serine + ATP = L-seryl-tRNA(Sec) + AMP + diphosphate + H(+). Its pathway is aminoacyl-tRNA biosynthesis; selenocysteinyl-tRNA(Sec) biosynthesis; L-seryl-tRNA(Sec) from L-serine and tRNA(Sec): step 1/1. In terms of biological role, catalyzes the attachment of serine to tRNA(Ser). Is also able to aminoacylate tRNA(Sec) with serine, to form the misacylated tRNA L-seryl-tRNA(Sec), which will be further converted into selenocysteinyl-tRNA(Sec). This is Serine--tRNA ligase from Shewanella oneidensis (strain ATCC 700550 / JCM 31522 / CIP 106686 / LMG 19005 / NCIMB 14063 / MR-1).